A 167-amino-acid polypeptide reads, in one-letter code: Putative pre-16S rRNA nuclease (167 aa).

A disordered region spans residues 1 to 24; that stretch reads MVLTQHRVPDRPGDPDQDPGRGRR. The segment covering 7–21 has biased composition (basic and acidic residues); it reads RVPDRPGDPDQDPGR.

It belongs to the YqgF nuclease family.

It localises to the cytoplasm. Functionally, could be a nuclease involved in processing of the 5'-end of pre-16S rRNA. This chain is Putative pre-16S rRNA nuclease, found in Mycolicibacterium paratuberculosis (strain ATCC BAA-968 / K-10) (Mycobacterium paratuberculosis).